We begin with the raw amino-acid sequence, 397 residues long: Subtilisin-like protease 3 (397 aa).

A signal peptide spans 1–19; sequence MGCIKVISVFLAAIAAVDA. Residues 20 to 116 constitute a propeptide that is removed on maturation; the sequence is RAFFHNRGGS…VEHDRVVKLA (97 aa). Positions 35 to 116 constitute an Inhibitor I9 domain; sequence SYIVVMKDGV…VEHDRVVKLA (82 aa). In terms of domain architecture, Peptidase S8 spans 126–397; sequence TWGLGRVSHR…NRLLYNGSGQ (272 aa). Catalysis depends on charge relay system residues aspartate 158 and histidine 189. The N-linked (GlcNAc...) asparagine glycan is linked to asparagine 250. The active-site Charge relay system is the serine 344. Asparagine 393 is a glycosylation site (N-linked (GlcNAc...) asparagine).

This sequence belongs to the peptidase S8 family.

The protein resides in the secreted. In terms of biological role, secreted subtilisin-like serine protease with keratinolytic activity that contributes to pathogenicity. The polypeptide is Subtilisin-like protease 3 (SUB3) (Trichophyton tonsurans (Scalp ringworm fungus)).